We begin with the raw amino-acid sequence, 542 residues long: Chaperonin GroEL (542 aa).

ATP contacts are provided by residues 29–32, 86–90, Gly413, 477–479, and Asp493; these read TIGP, DGTTT, and NAA.

Belongs to the chaperonin (HSP60) family. In terms of assembly, forms a cylinder of 14 subunits composed of two heptameric rings stacked back-to-back. Interacts with the co-chaperonin GroES.

The protein localises to the cytoplasm. It carries out the reaction ATP + H2O + a folded polypeptide = ADP + phosphate + an unfolded polypeptide.. In terms of biological role, together with its co-chaperonin GroES, plays an essential role in assisting protein folding. The GroEL-GroES system forms a nano-cage that allows encapsulation of the non-native substrate proteins and provides a physical environment optimized to promote and accelerate protein folding. This Lactobacillus acidophilus (strain ATCC 700396 / NCK56 / N2 / NCFM) protein is Chaperonin GroEL.